Reading from the N-terminus, the 101-residue chain is Synaptobrevin-B (101 aa).

The Cytoplasmic segment spans residues 1–76 (MSNNPNNSGQ…RRQMWCRNMK (76 aa)). The region spanning 13–73 (KTQSILQEVD…VTIRRQMWCR (61 aa)) is the v-SNARE coiled-coil homology domain. Residues 77–97 (LQLIIIAVVILVLAVILIPII) form a helical; Anchor for type IV membrane protein membrane-spanning segment. Topologically, residues 98-101 (MKFV) are vesicular.

Belongs to the synaptobrevin family.

Its subcellular location is the cytoplasmic vesicle. It localises to the secretory vesicle membrane. In terms of biological role, involved in the targeting and/or fusion of transport vesicles to their target membrane. The sequence is that of Synaptobrevin-B (sybB) from Dictyostelium discoideum (Social amoeba).